Consider the following 36-residue polypeptide: Conotoxin Bu21 (36 aa).

Positions Asp-1–Lys-21 are excised as a propeptide. Cystine bridges form between Cys-22–Cys-28 and Cys-23–Cys-34.

The protein belongs to the conotoxin A superfamily. As to expression, expressed by the venom duct.

The protein resides in the secreted. This chain is Conotoxin Bu21, found in Conus bullatus (Bubble cone).